The following is a 180-amino-acid chain: D(1A) dopamine receptor (180 aa).

The helical transmembrane segment at 1 to 10 (NTLLVCAAVI) threads the bilayer. Residues 11–21 (RFRHLRSKVTN) are Cytoplasmic-facing. A helical transmembrane segment spans residues 22–48 (FFVISLAVSDLLVAVLVMPWKAVAEIA). Topologically, residues 49–57 (GFWPFGSFC) are extracellular. An intrachain disulfide couples cysteine 57 to cysteine 147. The helical transmembrane segment at 58-80 (NIWVAFDIMCSTASILNLCVISV) threads the bilayer. The Cytoplasmic segment spans residues 81–99 (DRYWAISSPFRYERKMTPK). A helical membrane pass occupies residues 100-124 (AAFILIGVAWTLSVLISFIPVQLSW). Residues 125-153 (HKAKPTSPPDGNATSLDETVDNCDSSLSR) are Extracellular-facing. Asparagine 136 is a glycosylation site (N-linked (GlcNAc...) asparagine). Residues 154–179 (TYSISSSLVNFYNPVAIMXVTYTRIH) form a helical membrane-spanning segment. A topological domain (cytoplasmic) is located at residue arginine 180.

Belongs to the G-protein coupled receptor 1 family. Interacts with DNAJC14 via its C-terminus. Interacts with DRD2. Interacts with DORIP1.

Its subcellular location is the cell membrane. It localises to the endoplasmic reticulum membrane. It is found in the cell projection. The protein localises to the cilium membrane. In terms of biological role, dopamine receptor whose activity is mediated by G proteins which activate adenylyl cyclase. The chain is D(1A) dopamine receptor (DRD1) from Oryctolagus cuniculus (Rabbit).